The sequence spans 443 residues: Threonine/serine transporter TdcC (443 aa).

Transmembrane regions (helical) follow at residues 24–44 (WVLG…PISA), 45–65 (GIGG…IAFF), 95–115 (VGGV…LWIY), 140–160 (VVAL…KDLM), 163–183 (VMGY…LSLI), 207–227 (ILVT…FSPI), 259–279 (ASVL…FTLS), 319–339 (ASII…LGTL), 363–383 (LNMI…YINP), 385–405 (ILDL…CLLP), and 423–443 (SNYF…YQLM).

This sequence belongs to the amino acid/polyamine transporter 2 family. SdaC/TdcC subfamily.

The protein resides in the cell inner membrane. It catalyses the reaction L-threonine(in) + H(+)(in) = L-threonine(out) + H(+)(out). The enzyme catalyses L-serine(in) + H(+)(in) = L-serine(out) + H(+)(out). In terms of biological role, involved in the import of threonine and serine into the cell, with the concomitant import of a proton (symport system). The polypeptide is Threonine/serine transporter TdcC (Edwardsiella tarda).